Reading from the N-terminus, the 234-residue chain is 2-phospho-L-lactate guanylyltransferase (234 aa).

Belongs to the CofC family. As to quaternary structure, homodimer.

The enzyme catalyses (2S)-2-phospholactate + GTP + H(+) = (2S)-lactyl-2-diphospho-5'-guanosine + diphosphate. The protein operates within cofactor biosynthesis; coenzyme F420 biosynthesis. Functionally, guanylyltransferase that catalyzes the activation of (2S)-2-phospholactate (2-PL) as (2S)-lactyl-2-diphospho-5'-guanosine, via the condensation of 2-PL with GTP. It is involved in the biosynthesis of coenzyme F420, a hydride carrier cofactor. The sequence is that of 2-phospho-L-lactate guanylyltransferase from Methanobrevibacter ruminantium (strain ATCC 35063 / DSM 1093 / JCM 13430 / OCM 146 / M1) (Methanobacterium ruminantium).